The sequence spans 375 residues: DNA replication and repair protein RecF (375 aa).

Position 30 to 37 (30 to 37 (GNNAQGKS)) interacts with ATP.

It belongs to the RecF family.

The protein resides in the cytoplasm. The RecF protein is involved in DNA metabolism; it is required for DNA replication and normal SOS inducibility. RecF binds preferentially to single-stranded, linear DNA. It also seems to bind ATP. The sequence is that of DNA replication and repair protein RecF from Microcystis aeruginosa (strain NIES-843 / IAM M-2473).